The sequence spans 246 residues: MTSSLSRPSGRRADELRKVALTRHYTKHAEGSVLVEFGDTKVICTASVVERVPEFLRERGQGWLTAEYGMLPRATHTRSDREAARGKQTGRTQEIQRLIGRALRAVFDLEALGPRTINIDCDVIQADGGTRTASITGAFVAAHDAVSKLIAAGKLARSPITDHVAAISVGVYEGAPVLDLDYAEDSRCDTDMNVVMTGAGGFVEVQGTAEGVPFSRAEMNALLDLAQAGIGRLVQLQKDVLGADHV.

Phosphate-binding positions include Arg-91 and Gly-129–Arg-131.

It belongs to the RNase PH family. In terms of assembly, homohexameric ring arranged as a trimer of dimers.

The catalysed reaction is tRNA(n+1) + phosphate = tRNA(n) + a ribonucleoside 5'-diphosphate. Functionally, phosphorolytic 3'-5' exoribonuclease that plays an important role in tRNA 3'-end maturation. Removes nucleotide residues following the 3'-CCA terminus of tRNAs; can also add nucleotides to the ends of RNA molecules by using nucleoside diphosphates as substrates, but this may not be physiologically important. Probably plays a role in initiation of 16S rRNA degradation (leading to ribosome degradation) during starvation. This Burkholderia vietnamiensis (strain G4 / LMG 22486) (Burkholderia cepacia (strain R1808)) protein is Ribonuclease PH.